Here is a 795-residue protein sequence, read N- to C-terminus: Endoplasmin (795 aa).

The signal sequence occupies residues 1 to 21; that stretch reads MKSAWALALACTLLLAASVTA. Positions 41–43 match the SRT pseudosubstrate motif motif; that stretch reads SRT. Residues asparagine 61 and asparagine 106 are each glycosylated (N-linked (GlcNAc...) asparagine). ATP is bound by residues asparagine 106, aspartate 148, asparagine 161, and phenylalanine 198. N-linked (GlcNAc...) asparagine glycosylation occurs at asparagine 216. Over residues 289 to 316 the composition is skewed to acidic residues; sequence EEPVEEEEAKEEKEETDDNEAAVEEEEE. A disordered region spans residues 289 to 322; that stretch reads EEPVEEEEAKEEKEETDDNEAAVEEEEEEKKPKT. Asparagine 444, asparagine 480, and asparagine 501 each carry an N-linked (GlcNAc...) asparagine glycan. Residues 751–795 are disordered; it reads DAKVEEEPEEPEDAAEEAEQDEEEVDADAEDSETQKESTDVKDEL. Residues 756–782 show a composition bias toward acidic residues; sequence EEPEEPEDAAEEAEQDEEEVDADAEDS. Residues 783–795 are compositionally biased toward basic and acidic residues; the sequence is ETQKESTDVKDEL. Positions 792–795 match the Prevents secretion from ER motif; sequence KDEL.

This sequence belongs to the heat shock protein 90 family. In terms of assembly, homodimer; disulfide-linked.

The protein localises to the endoplasmic reticulum lumen. The protein resides in the sarcoplasmic reticulum lumen. It carries out the reaction ATP + H2O = ADP + phosphate + H(+). In terms of biological role, ATP-dependent chaperone involved in the processing of proteins in the endoplasmic reticulum, regulating their transport. This Gallus gallus (Chicken) protein is Endoplasmin (HSP90B1).